We begin with the raw amino-acid sequence, 61 residues long: UPF0337 protein LMOf2365_2190 (61 aa).

The segment at 1-61 (MSEDKGMKDK…TGDAKKKLSE (61 aa)) is disordered.

The protein belongs to the UPF0337 (CsbD) family.

This Listeria monocytogenes serotype 4b (strain F2365) protein is UPF0337 protein LMOf2365_2190.